Reading from the N-terminus, the 253-residue chain is rRNA adenine N-6-methyltransferase (253 aa).

S-adenosyl-L-methionine is bound by residues N14, L16, G40, E61, D85, and N101. The segment at 229–253 (CAREESTPRPYLPDCTPTTGSISSR) is disordered. Positions 244-253 (TPTTGSISSR) are enriched in polar residues.

This sequence belongs to the class I-like SAM-binding methyltransferase superfamily. rRNA adenine N(6)-methyltransferase family.

Involved in erythromycin resistance. This Corynebacterium diphtheriae protein is rRNA adenine N-6-methyltransferase (ermA).